The primary structure comprises 205 residues: dTTP/UTP pyrophosphatase (205 aa).

The active-site Proton acceptor is aspartate 71.

The protein belongs to the Maf family. YhdE subfamily. Requires a divalent metal cation as cofactor.

The protein resides in the cytoplasm. The catalysed reaction is dTTP + H2O = dTMP + diphosphate + H(+). The enzyme catalyses UTP + H2O = UMP + diphosphate + H(+). In terms of biological role, nucleoside triphosphate pyrophosphatase that hydrolyzes dTTP and UTP. May have a dual role in cell division arrest and in preventing the incorporation of modified nucleotides into cellular nucleic acids. This Syntrophus aciditrophicus (strain SB) protein is dTTP/UTP pyrophosphatase.